We begin with the raw amino-acid sequence, 92 residues long: Large ribosomal subunit protein uL24 (92 aa).

It belongs to the universal ribosomal protein uL24 family. In terms of assembly, part of the 50S ribosomal subunit.

In terms of biological role, one of two assembly initiator proteins, it binds directly to the 5'-end of the 23S rRNA, where it nucleates assembly of the 50S subunit. One of the proteins that surrounds the polypeptide exit tunnel on the outside of the subunit. The sequence is that of Large ribosomal subunit protein uL24 from Opitutus terrae (strain DSM 11246 / JCM 15787 / PB90-1).